We begin with the raw amino-acid sequence, 309 residues long: Lipoyl synthase (309 aa).

[4Fe-4S] cluster is bound by residues cysteine 56, cysteine 61, cysteine 67, cysteine 82, cysteine 86, cysteine 89, and serine 296. Positions 68–285 (FKRGTATFMI…RVAGLKMGFS (218 aa)) constitute a Radical SAM core domain.

The protein belongs to the radical SAM superfamily. Lipoyl synthase family. The cofactor is [4Fe-4S] cluster.

Its subcellular location is the cytoplasm. It carries out the reaction [[Fe-S] cluster scaffold protein carrying a second [4Fe-4S](2+) cluster] + N(6)-octanoyl-L-lysyl-[protein] + 2 oxidized [2Fe-2S]-[ferredoxin] + 2 S-adenosyl-L-methionine + 4 H(+) = [[Fe-S] cluster scaffold protein] + N(6)-[(R)-dihydrolipoyl]-L-lysyl-[protein] + 4 Fe(3+) + 2 hydrogen sulfide + 2 5'-deoxyadenosine + 2 L-methionine + 2 reduced [2Fe-2S]-[ferredoxin]. It functions in the pathway protein modification; protein lipoylation via endogenous pathway; protein N(6)-(lipoyl)lysine from octanoyl-[acyl-carrier-protein]: step 2/2. In terms of biological role, catalyzes the radical-mediated insertion of two sulfur atoms into the C-6 and C-8 positions of the octanoyl moiety bound to the lipoyl domains of lipoate-dependent enzymes, thereby converting the octanoylated domains into lipoylated derivatives. The protein is Lipoyl synthase of Syntrophotalea carbinolica (strain DSM 2380 / NBRC 103641 / GraBd1) (Pelobacter carbinolicus).